The sequence spans 556 residues: 2-succinyl-5-enolpyruvyl-6-hydroxy-3-cyclohexene-1-carboxylate synthase (556 aa).

This sequence belongs to the TPP enzyme family. MenD subfamily. Homodimer. Mg(2+) serves as cofactor. Requires Mn(2+) as cofactor. Thiamine diphosphate is required as a cofactor.

The enzyme catalyses isochorismate + 2-oxoglutarate + H(+) = 5-enolpyruvoyl-6-hydroxy-2-succinyl-cyclohex-3-ene-1-carboxylate + CO2. Its pathway is quinol/quinone metabolism; 1,4-dihydroxy-2-naphthoate biosynthesis; 1,4-dihydroxy-2-naphthoate from chorismate: step 2/7. The protein operates within quinol/quinone metabolism; menaquinone biosynthesis. Functionally, catalyzes the thiamine diphosphate-dependent decarboxylation of 2-oxoglutarate and the subsequent addition of the resulting succinic semialdehyde-thiamine pyrophosphate anion to isochorismate to yield 2-succinyl-5-enolpyruvyl-6-hydroxy-3-cyclohexene-1-carboxylate (SEPHCHC). The polypeptide is 2-succinyl-5-enolpyruvyl-6-hydroxy-3-cyclohexene-1-carboxylate synthase (Salmonella agona (strain SL483)).